Consider the following 707-residue polypeptide: Coiled-coil domain-containing protein 177 (707 aa).

2 disordered regions span residues 1–65 (MVDP…EGGR) and 183–294 (PSAG…SALT). 3 stretches are compositionally biased toward low complexity: residues 38–49 (AASSASASASAA), 183–215 (PSAG…PSSA), and 243–258 (ALSS…YSGE). The residue at position 311 (serine 311) is a Phosphoserine. Positions 364–605 (GQWELQRVHA…LQHATQVAEE (242 aa)) form a coiled coil. Disordered regions lie at residues 372–426 (HAKQ…RSEE), 454–581 (KLQQ…EREH), 597–637 (QHAT…RDED), and 652–707 (ERSE…LDRK). 7 stretches are compositionally biased toward basic and acidic residues: residues 377-392 (RERE…EQGR), 399-426 (VEER…RSEE), 454-484 (KLQQ…ERAQ), 491-514 (QRQE…RHEA), 543-581 (ENYE…EREH), 618-637 (RLEK…RDED), and 652-664 (ERSE…RRSA). Low complexity predominate over residues 665 to 675 (LESARSTARAS). Over residues 677–707 (HVREKVREETNTRSFDRMVREAQLHASLDRK) the composition is skewed to basic and acidic residues.

This chain is Coiled-coil domain-containing protein 177 (CCDC177), found in Homo sapiens (Human).